The sequence spans 63 residues: Keratin-associated protein 8-1 (63 aa).

The interval 12-54 is 12 X 2 AA repeats of G-[YCGS]; that stretch reads PGCYWGSYGYPLGYSVGCGYGSTYSPVGYGFGYGYNGCGAFGY.

It belongs to the KRTAP type 8 family. As to quaternary structure, interacts with hair keratins. As to expression, is essentially restricted to only one vertical half of the hair forming compartment and in beard hairs is absent from the central medulla.

Functionally, in the hair cortex, hair keratin intermediate filaments are embedded in an interfilamentous matrix, consisting of hair keratin-associated proteins (KRTAP), which are essential for the formation of a rigid and resistant hair shaft through their extensive disulfide bond cross-linking with abundant cysteine residues of hair keratins. The matrix proteins include the high-sulfur and high-glycine-tyrosine keratins. This chain is Keratin-associated protein 8-1 (KRTAP8-1), found in Homo sapiens (Human).